The primary structure comprises 88 residues: Small ribosomal subunit protein uS15 (88 aa).

This sequence belongs to the universal ribosomal protein uS15 family. As to quaternary structure, part of the 30S ribosomal subunit. Forms a bridge to the 50S subunit in the 70S ribosome, contacting the 23S rRNA.

Functionally, one of the primary rRNA binding proteins, it binds directly to 16S rRNA where it helps nucleate assembly of the platform of the 30S subunit by binding and bridging several RNA helices of the 16S rRNA. Forms an intersubunit bridge (bridge B4) with the 23S rRNA of the 50S subunit in the ribosome. This chain is Small ribosomal subunit protein uS15, found in Desulfitobacterium hafniense (strain Y51).